A 133-amino-acid chain; its full sequence is Large ribosomal subunit protein bL20 (133 aa).

This sequence belongs to the bacterial ribosomal protein bL20 family.

In terms of biological role, binds directly to 23S ribosomal RNA and is necessary for the in vitro assembly process of the 50S ribosomal subunit. It is not involved in the protein synthesizing functions of that subunit. The polypeptide is Large ribosomal subunit protein bL20 (Bartonella henselae (strain ATCC 49882 / DSM 28221 / CCUG 30454 / Houston 1) (Rochalimaea henselae)).